Reading from the N-terminus, the 231-residue chain is Transmembrane gamma-carboxyglutamic acid protein 3 (231 aa).

Residues 1 to 19 (MAVFLEAKNAHAVLKRFPR) constitute a propeptide that is removed on maturation. In terms of domain architecture, Gla spans 20-65 (ANEFLEELRQGTIERECMEEICSYEEVKEVFENKEKTMEFWKGYPN). Residues 20–78 (ANEFLEELRQGTIERECMEEICSYEEVKEVFENKEKTMEFWKGYPNAVYSVRDPSQSSD) are Extracellular-facing. 4-carboxyglutamate occurs at positions 22, 25, 26, 33, 35, 38, 39, 44, 45, 48, 51, 54, and 58. C36 and C41 form a disulfide bridge. Residues 79 to 101 (AMYVVVPLLGVVLLIVIALFIIW) traverse the membrane as a helical segment. At 102–231 (RCQLQKATRH…IVAASPSADK (130 aa)) the chain is on the cytoplasmic side. 2 disordered regions span residues 140-165 (HSQG…SRGG) and 184-231 (RLSS…SADK). A compositionally biased stretch (polar residues) spans 201–212 (QEGSSEEASVSY).

Gla residues are produced after subsequent post-translational modifications of glutamate by a vitamin K-dependent gamma-carboxylase.

The protein localises to the membrane. The sequence is that of Transmembrane gamma-carboxyglutamic acid protein 3 (Prrg3) from Mus musculus (Mouse).